Consider the following 221-residue polypeptide: Probable serine protease inhibitor 6 (221 aa).

The signal sequence occupies residues 1 to 22 (MKCLFLLCLCLFPIVVFSSTFT). Positions 23–28 (SQNPIN) are excised as a propeptide. The Vacuolar targeting signal motif lies at 25-30 (NPINLP). Intrachain disulfides connect Cys76/Cys125 and Cys174/Cys191.

The protein belongs to the protease inhibitor I3 (leguminous Kunitz-type inhibitor) family.

The protein localises to the vacuole. Its function is as follows. Inhibitor of trypsin (serine protease). May protect the plant by inhibiting proteases of invading organisms. This chain is Probable serine protease inhibitor 6, found in Solanum tuberosum (Potato).